Reading from the N-terminus, the 36-residue chain is Kappa-theraphotoxin-Aa1a (36 aa).

3 cysteine pairs are disulfide-bonded: cysteine 3–cysteine 18, cysteine 10–cysteine 23, and cysteine 17–cysteine 30. Isoleucine 36 carries the post-translational modification Isoleucine amide.

It belongs to the neurotoxin 10 (Hwtx-1) family. Expressed by the venom gland.

It is found in the secreted. Functionally, selective inhibitor of voltage-gated potassium channel Kv10.1/KCNH1/EAG1 (IC(50)=637 nM). It acts by shifting the voltage dependence of channel activation in a depolarising direction. It shows a 100% inhibition at saturating concentrations, shows fast on-rates and is reversible. It also slightly affects channel inactivation, when the membrane is highly depolarised (&gt;+80 mV). In Avicularia aurantiaca (Yellow-banded pinktoe tarantula), this protein is Kappa-theraphotoxin-Aa1a.